The primary structure comprises 991 residues: Toll-like receptor 13 (991 aa).

Positions 1 to 68 (MSGLYRILVQ…GFSLPPVAET (68 aa)) are cleaved as a signal peptide. Over 69 to 783 (YGFNKCTQYE…DAMCNFDLGK (715 aa)) the chain is Extracellular. N-linked (GlcNAc...) asparagine glycans are attached at residues N93, N109, and N125. LRR repeat units lie at residues 104–125 (YTTHLNLTHNEIQVLPPWSFTN), 128–149 (ALVDLRLEWNSIWKIDEGAFRG), 152–174 (NLTLLNLVENKIQSVNNSFEGLS), 175–196 (SLKTLLLSHNQITHIHKDAFTP), 199–220 (KLKYLSLSRNNISDFSGILEAV), 225–246 (CLERLDLTNNSIMYLDHSPRSL), 248–268 (SLTHLSFEGNKLRELNFSALS), 271–292 (NLTNLSASRNGNKVIQNVYLKT), 295–315 (QLKSLNLSGTVIKLENLSAKH), 318–338 (NLRAMDLSNWELRHGHLDMKT), 348–368 (KLETLVFQKNVTNAEGIKQLA), 372–394 (RLLFLDLGQNSDLIYLNDSEFNA), 397–418 (SLQKLNLNKCQLSFINNRTWSS), 421–442 (NLTSLDLSHNKFKSFPDFAFSP), 445–466 (HLEFLSLSRNPITELNNLAFSG), 469–490 (ALKELNLAACWIVTIDRYSFTQ), 493–514 (NLEVLDLGDNNIRTLNHGTFRP), 517–538 (KLQSLILSHNCLKILEPNSFSG), 541–562 (NLRSLDLMYNSLSYFHEHLFSG), 565–585 (KLLILKLGFNKITYETTRTLQ), 594–617 (SLKQLNLEGQRHGIQVVPSNFFQG), 620–641 (SLQELLLGKNPSVFLDHHQFDP), 644–665 (NLTKLDISGTKDGDRSLYLNAS), 672–693 (RLKILRLENNNLESLVPDMFSS), and 696–716 (SLQVFSLRFNNLKVINQSHLK). 2 N-linked (GlcNAc...) asparagine glycosylation sites follow: N152 and N167. N-linked (GlcNAc...) asparagine glycosylation is found at N209, N233, N263, N271, N274, N300, and N310. N-linked (GlcNAc...) asparagine glycosylation is found at N357, N388, N413, and N421. N-linked (GlcNAc...) asparagine glycosylation is found at N644 and N663. Residues N711 and N742 are each glycosylated (N-linked (GlcNAc...) asparagine). Residues 729-779 (NKLQCTCDNLWFKNWSMNTEEVHIPFLRSYPCQQPGSQSLLIDFDDAMCNF) enclose the LRRCT domain. A helical membrane pass occupies residues 784–804 (VYFLCSFSMVLSTMVFSWFST). The Cytoplasmic portion of the chain corresponds to 805 to 991 (KMIASLWYGL…KENTHLIVVE (187 aa)). In terms of domain architecture, TIR spans 832–975 (FLYDAFVSFS…LFWARIRNAL (144 aa)).

Belongs to the Toll-like receptor family. In terms of assembly, binds MYD88 via their respective TIR domains. Interacts with UNC93B1.

Its subcellular location is the endosome membrane. In terms of biological role, component of innate and adaptive immunity that recognizes and binds 23S rRNA from bacteria. TLRs (Toll-like receptors) control host immune response against pathogens through recognition of molecular patterns specific to microorganisms. Acts via MYD88 and TRAF6, leading to NF-kappa-B activation, cytokine secretion and the inflammatory response. Specifically binds the 5'-CGGAAAGACC-3' sequence on bacterial 23S rRNA, a sequence also bound by MLS group antibiotics (including erythromycin). May also recognize vesicular stomatitis virus; however, these data require additional evidences. This Mus musculus (Mouse) protein is Toll-like receptor 13 (Tlr13).